The sequence spans 312 residues: Homoserine kinase (312 aa).

91 to 101 lines the ATP pocket; that stretch reads PVASGLGSSAC.

The protein belongs to the GHMP kinase family. Homoserine kinase subfamily.

Its subcellular location is the cytoplasm. It carries out the reaction L-homoserine + ATP = O-phospho-L-homoserine + ADP + H(+). It functions in the pathway amino-acid biosynthesis; L-threonine biosynthesis; L-threonine from L-aspartate: step 4/5. Catalyzes the ATP-dependent phosphorylation of L-homoserine to L-homoserine phosphate. The protein is Homoserine kinase of Blochmanniella pennsylvanica (strain BPEN).